Here is a 96-residue protein sequence, read N- to C-terminus: Protein Vpr (96 aa).

The interval 1 to 42 (MEQAPEDQGPQREPYNDWTLELLEELKNEAVRHFPRIWLHSL) is homooligomerization. Phosphoserine; by host is present on residues Ser79, Ser94, and Ser96.

The protein belongs to the HIV-1 VPR protein family. In terms of assembly, homooligomer, may form homodimer. Interacts with p6-gag region of the Pr55 Gag precursor protein through a (Leu-X-X)4 motif near the C-terminus of the P6gag protein. Interacts with host UNG. May interact with host RAD23A/HHR23A. Interacts with host VPRBP/DCAF1, leading to hijack the CUL4A-RBX1-DDB1-DCAF1/VPRBP complex, mediating ubiquitination of host proteins such as TERT and ZGPAT and arrest of the cell cycle in G2 phase. Phosphorylated on several residues by host. These phosphorylations regulate VPR activity for the nuclear import of the HIV-1 pre-integration complex.

It is found in the virion. The protein resides in the host nucleus. It localises to the host extracellular space. During virus replication, may deplete host UNG protein, and incude G2-M cell cycle arrest. Acts by targeting specific host proteins for degradation by the 26S proteasome, through association with the cellular CUL4A-DDB1 E3 ligase complex by direct interaction with host VPRPB/DCAF-1. Cell cycle arrest reportedly occurs within hours of infection and is not blocked by antiviral agents, suggesting that it is initiated by the VPR carried into the virion. Additionally, VPR induces apoptosis in a cell cycle dependent manner suggesting that these two effects are mechanistically linked. Detected in the serum and cerebrospinal fluid of AIDS patient, VPR may also induce cell death to bystander cells. Functionally, during virus entry, plays a role in the transport of the viral pre-integration (PIC) complex to the host nucleus. This function is crucial for viral infection of non-dividing macrophages. May act directly at the nuclear pore complex, by binding nucleoporins phenylalanine-glycine (FG)-repeat regions. The chain is Protein Vpr from Human immunodeficiency virus type 1 group M subtype B (strain 89.6) (HIV-1).